Consider the following 306-residue polypeptide: Porphobilinogen deaminase (306 aa).

Residue Cys-239 is modified to S-(dipyrrolylmethanemethyl)cysteine.

Belongs to the HMBS family. Monomer. Dipyrromethane is required as a cofactor.

The catalysed reaction is 4 porphobilinogen + H2O = hydroxymethylbilane + 4 NH4(+). Its pathway is porphyrin-containing compound metabolism; protoporphyrin-IX biosynthesis; coproporphyrinogen-III from 5-aminolevulinate: step 2/4. Functionally, tetrapolymerization of the monopyrrole PBG into the hydroxymethylbilane pre-uroporphyrinogen in several discrete steps. The chain is Porphobilinogen deaminase from Helicobacter pylori (strain Shi470).